Here is a 445-residue protein sequence, read N- to C-terminus: Tubulin beta-9 chain (445 aa).

GTP-binding residues include Gln11, Glu69, Ser138, Gly142, Thr143, Gly144, Asn204, and Asn226. Glu69 is a Mg(2+) binding site. Positions 423-445 (QQYQDATADDEEYEEEEEYEAEA) are disordered. Residues 429–445 (TADDEEYEEEEEYEAEA) show a composition bias toward acidic residues.

This sequence belongs to the tubulin family. Dimer of alpha and beta chains. A typical microtubule is a hollow water-filled tube with an outer diameter of 25 nm and an inner diameter of 15 nM. Alpha-beta heterodimers associate head-to-tail to form protofilaments running lengthwise along the microtubule wall with the beta-tubulin subunit facing the microtubule plus end conferring a structural polarity. Microtubules usually have 13 protofilaments but different protofilament numbers can be found in some organisms and specialized cells. The cofactor is Mg(2+).

The protein resides in the cytoplasm. It is found in the cytoskeleton. Tubulin is the major constituent of microtubules, a cylinder consisting of laterally associated linear protofilaments composed of alpha- and beta-tubulin heterodimers. Microtubules grow by the addition of GTP-tubulin dimers to the microtubule end, where a stabilizing cap forms. Below the cap, tubulin dimers are in GDP-bound state, owing to GTPase activity of alpha-tubulin. The sequence is that of Tubulin beta-9 chain from Gossypium hirsutum (Upland cotton).